The chain runs to 280 residues: Phosphatidylserine decarboxylase proenzyme (280 aa).

Residues aspartate 88, histidine 145, and serine 249 each act as charge relay system; for autoendoproteolytic cleavage activity in the active site. Serine 249 (schiff-base intermediate with substrate; via pyruvic acid; for decarboxylase activity) is an active-site residue. The residue at position 249 (serine 249) is a Pyruvic acid (Ser); by autocatalysis.

It belongs to the phosphatidylserine decarboxylase family. PSD-B subfamily. Prokaryotic type I sub-subfamily. As to quaternary structure, heterodimer of a large membrane-associated beta subunit and a small pyruvoyl-containing alpha subunit. Pyruvate is required as a cofactor. In terms of processing, is synthesized initially as an inactive proenzyme. Formation of the active enzyme involves a self-maturation process in which the active site pyruvoyl group is generated from an internal serine residue via an autocatalytic post-translational modification. Two non-identical subunits are generated from the proenzyme in this reaction, and the pyruvate is formed at the N-terminus of the alpha chain, which is derived from the carboxyl end of the proenzyme. The autoendoproteolytic cleavage occurs by a canonical serine protease mechanism, in which the side chain hydroxyl group of the serine supplies its oxygen atom to form the C-terminus of the beta chain, while the remainder of the serine residue undergoes an oxidative deamination to produce ammonia and the pyruvoyl prosthetic group on the alpha chain. During this reaction, the Ser that is part of the protease active site of the proenzyme becomes the pyruvoyl prosthetic group, which constitutes an essential element of the active site of the mature decarboxylase.

It localises to the cell membrane. The enzyme catalyses a 1,2-diacyl-sn-glycero-3-phospho-L-serine + H(+) = a 1,2-diacyl-sn-glycero-3-phosphoethanolamine + CO2. The protein operates within phospholipid metabolism; phosphatidylethanolamine biosynthesis; phosphatidylethanolamine from CDP-diacylglycerol: step 2/2. Its function is as follows. Catalyzes the formation of phosphatidylethanolamine (PtdEtn) from phosphatidylserine (PtdSer). This chain is Phosphatidylserine decarboxylase proenzyme, found in Chromobacterium violaceum (strain ATCC 12472 / DSM 30191 / JCM 1249 / CCUG 213 / NBRC 12614 / NCIMB 9131 / NCTC 9757 / MK).